The primary structure comprises 347 residues: Dihydroorotase (347 aa).

Zn(2+) is bound by residues His14 and His16. Residues 16-18 (HLR) and Asn42 each bind substrate. Residues Lys100, His137, and His175 each coordinate Zn(2+). The residue at position 100 (Lys100) is an N6-carboxylysine. His137 is a binding site for substrate. Substrate is bound at residue Leu220. Position 248 (Asp248) interacts with Zn(2+). The active site involves Asp248. Residues His252 and Ala264 each coordinate substrate.

It belongs to the metallo-dependent hydrolases superfamily. DHOase family. Class II DHOase subfamily. As to quaternary structure, homodimer. It depends on Zn(2+) as a cofactor.

It carries out the reaction (S)-dihydroorotate + H2O = N-carbamoyl-L-aspartate + H(+). Its pathway is pyrimidine metabolism; UMP biosynthesis via de novo pathway; (S)-dihydroorotate from bicarbonate: step 3/3. Functionally, catalyzes the reversible cyclization of carbamoyl aspartate to dihydroorotate. This chain is Dihydroorotase, found in Stutzerimonas stutzeri (strain A1501) (Pseudomonas stutzeri).